Consider the following 206-residue polypeptide: Probable GTP-binding protein EngB (206 aa).

Residues Gln-24–Leu-198 form the EngB-type G domain. Residues Gly-32–Ser-39, Gly-59–Leu-63, Asp-77–Gly-80, Thr-144–Asp-147, and Phe-177–Ala-179 each bind GTP. Residues Ser-39 and Thr-61 each coordinate Mg(2+).

This sequence belongs to the TRAFAC class TrmE-Era-EngA-EngB-Septin-like GTPase superfamily. EngB GTPase family. Mg(2+) serves as cofactor.

In terms of biological role, necessary for normal cell division and for the maintenance of normal septation. This is Probable GTP-binding protein EngB from Alkalilimnicola ehrlichii (strain ATCC BAA-1101 / DSM 17681 / MLHE-1).